The primary structure comprises 318 residues: Methionyl-tRNA formyltransferase (318 aa).

120 to 123 (SLLP) contacts (6S)-5,6,7,8-tetrahydrofolate.

Belongs to the Fmt family.

The catalysed reaction is L-methionyl-tRNA(fMet) + (6R)-10-formyltetrahydrofolate = N-formyl-L-methionyl-tRNA(fMet) + (6S)-5,6,7,8-tetrahydrofolate + H(+). Attaches a formyl group to the free amino group of methionyl-tRNA(fMet). The formyl group appears to play a dual role in the initiator identity of N-formylmethionyl-tRNA by promoting its recognition by IF2 and preventing the misappropriation of this tRNA by the elongation apparatus. The protein is Methionyl-tRNA formyltransferase of Variovorax paradoxus (strain S110).